Reading from the N-terminus, the 43-residue chain is Seed non-specific lipid transfer protein-like (43 aa).

The protein belongs to the plant LTP family. In terms of assembly, homodimer.

Functionally, plant non-specific lipid-transfer proteins transfer phospholipids as well as galactolipids across membranes. May play a role in wax or cutin deposition in the cell walls of expanding epidermal cells and certain secretory tissues. This isoform inhibits the hyphal growth of several fungi in vitro. In Raphanus sativus (Radish), this protein is Seed non-specific lipid transfer protein-like.